The primary structure comprises 189 residues: Sec-independent protein translocase protein TatB (189 aa).

A helical transmembrane segment spans residues 1–21 (MFGVGIFEVLVILIVAVIALG). The disordered stretch occupies residues 152–189 (TQKPQNSIDSINSKESSVDSLHSPSIVESTQSSSSKDS). Polar residues predominate over residues 153-189 (QKPQNSIDSINSKESSVDSLHSPSIVESTQSSSSKDS).

Belongs to the TatB family. In terms of assembly, the Tat system comprises two distinct complexes: a TatABC complex, containing multiple copies of TatA, TatB and TatC subunits, and a separate TatA complex, containing only TatA subunits. Substrates initially bind to the TatABC complex, which probably triggers association of the separate TatA complex to form the active translocon.

It is found in the cell inner membrane. Functionally, part of the twin-arginine translocation (Tat) system that transports large folded proteins containing a characteristic twin-arginine motif in their signal peptide across membranes. Together with TatC, TatB is part of a receptor directly interacting with Tat signal peptides. TatB may form an oligomeric binding site that transiently accommodates folded Tat precursor proteins before their translocation. This Helicobacter hepaticus (strain ATCC 51449 / 3B1) protein is Sec-independent protein translocase protein TatB.